Reading from the N-terminus, the 440-residue chain is Probable aldose 1-epimerase ARB_05372 (440 aa).

A signal peptide spans 1 to 24 (MCGVLRQLMLLLLAFLSITPSCSA). N-linked (GlcNAc...) asparagine glycans are attached at residues N32, N38, N43, N68, and N112. 125 to 126 (NR) is a substrate binding site. Residues N129, N147, N163, N171, and N199 are each glycosylated (N-linked (GlcNAc...) asparagine). H233 functions as the Proton donor in the catalytic mechanism. N243, N275, N281, and N306 each carry an N-linked (GlcNAc...) asparagine glycan. D311 contacts substrate. 4 N-linked (GlcNAc...) asparagine glycosylation sites follow: N321, N337, N365, and N385. Catalysis depends on E401, which acts as the Proton acceptor.

The protein belongs to the aldose epimerase family. Monomer.

It is found in the secreted. The enzyme catalyses alpha-D-glucose = beta-D-glucose. The protein operates within carbohydrate metabolism; hexose metabolism. Mutarotase converts alpha-aldose to the beta-anomer. It is active on D-glucose, L-arabinose, D-xylose, D-galactose, maltose and lactose. The polypeptide is Probable aldose 1-epimerase ARB_05372 (Arthroderma benhamiae (strain ATCC MYA-4681 / CBS 112371) (Trichophyton mentagrophytes)).